We begin with the raw amino-acid sequence, 136 residues long: Neuropeptide CCHamide-2 (136 aa).

The signal sequence occupies residues 1-24; it reads MKSTISLLLVVICTVVLAAQQSQA. Cys-28 and Cys-35 form a disulfide bridge. At His-39 the chain carries Histidine amide. The disordered stretch occupies residues 42–78; sequence RSLSPGSGSGTGVGGGMGEAASGGQEPDYVRPNGLLP. Residues 43-136 constitute a propeptide that is removed on maturation; sequence SLSPGSGSGT…ANSAELNGVN (94 aa). Over residues 48-59 the composition is skewed to gly residues; the sequence is SGSGTGVGGGMG.

Expressed in endocrine cells of the larval midgut (at protein level). Also expressed in endocrine cells of the midgut of adult males and females (at protein level). In the midgut, expression occurs mainly in the anterior region (at protein level). In the larval central nervous system, expressed in about 40 neurons in the brain hemispheres and ventral nerve cord (at protein level). Highly expressed in larval and adult gut with low levels in larval and adult brain. Very little expression in the larval fat body. However, another study shows high levels of expression in the larval fat body as well as the larval gut with low levels in the larval central nervous system.

The protein resides in the secreted. Its function is as follows. Ligand for the CCHamide-2 receptor CCHa2-R. In one study, shown to be an orexigenic peptide which induces appetite and stimulates food intake, leading to the release of insulin-like peptides which stimulate growth. In another study, shown to be a nutrient-sensitive peptide derived from peripheral tissues which controls growth by directly regulating the production and release of insulin-like peptides. The polypeptide is Neuropeptide CCHamide-2 (Drosophila melanogaster (Fruit fly)).